The primary structure comprises 278 residues: Probable cytochrome c oxidase subunit 3 (278 aa).

Helical transmembrane passes span 21–41 (PWPVLTSFALLLLVIGGVSFM), 46–66 (FNIYILSAGVISVGYCLYSWW), 89–109 (IGMALFILTEIVFFGVFFASF), 174–194 (CVTALALTILLGIFFTTMQAY), 212–232 (FYLATGFHGAHVIIGTIFLIV), and 256–276 (AWYWHFVDVVWLFLFTFVYIF).

The protein belongs to the cytochrome c oxidase subunit 3 family.

The protein localises to the cell membrane. It catalyses the reaction 4 Fe(II)-[cytochrome c] + O2 + 8 H(+)(in) = 4 Fe(III)-[cytochrome c] + 2 H2O + 4 H(+)(out). This is Probable cytochrome c oxidase subunit 3 (ctaE) from Rickettsia felis (strain ATCC VR-1525 / URRWXCal2) (Rickettsia azadi).